Here is a 260-residue protein sequence, read N- to C-terminus: UPF0294 protein YE0917 (260 aa).

Belongs to the UPF0294 family.

It is found in the cytoplasm. This chain is UPF0294 protein YE0917, found in Yersinia enterocolitica serotype O:8 / biotype 1B (strain NCTC 13174 / 8081).